We begin with the raw amino-acid sequence, 89 residues long: Small ribosomal subunit protein uS15 (89 aa).

This sequence belongs to the universal ribosomal protein uS15 family. Part of the 30S ribosomal subunit. Forms a bridge to the 50S subunit in the 70S ribosome, contacting the 23S rRNA.

Functionally, one of the primary rRNA binding proteins, it binds directly to 16S rRNA where it helps nucleate assembly of the platform of the 30S subunit by binding and bridging several RNA helices of the 16S rRNA. In terms of biological role, forms an intersubunit bridge (bridge B4) with the 23S rRNA of the 50S subunit in the ribosome. This is Small ribosomal subunit protein uS15 from Alcanivorax borkumensis (strain ATCC 700651 / DSM 11573 / NCIMB 13689 / SK2).